Reading from the N-terminus, the 97-residue chain is Essential MCU regulator, mitochondrial (97 aa).

A mitochondrion-targeting transit peptide spans 1–35 (MIVPRLALPISLALQRVSRRVAEHPHNLRILQRHM). The helical transmembrane segment at 53–73 (PFGLLAIFCAVIPGLFVGATI) threads the bilayer.

Belongs to the SMDT1/EMRE family.

The protein localises to the mitochondrion inner membrane. In terms of biological role, essential regulatory subunit of the mitochondrial calcium uniporter MCU channel, a protein that mediates calcium uptake into mitochondria. The polypeptide is Essential MCU regulator, mitochondrial (Drosophila melanogaster (Fruit fly)).